A 1173-amino-acid chain; its full sequence is Tectonin beta-propeller repeat-containing protein 1 (1173 aa).

4 TECPR repeats span residues 209 to 240, 254 to 285, 301 to 332, and 344 to 376; these read LSVW…TELE, DLLW…TIVE, NVVW…IEMV, and DQVF…KSIV. Positions 403 to 489 are disordered; sequence IKEHSDSPIP…AGPVPKAGAP (87 aa). A compositionally biased stretch (low complexity) spans 409-422; it reads SPIPSDIESSSEPE. Residues 424-434 show a composition bias toward polar residues; that stretch reads SAVQENSSDSS. A PH domain is found at 609-718; sequence VWVKTGALQW…WLVLLSMSCY (110 aa). 5 TECPR repeats span residues 730 to 757, 952 to 983, 997 to 1028, 1043 to 1074, and 1086 to 1126; these read QAIW…TNGR, IALW…LHVG, LQVW…YHIP, TSVF…EHMS, and DQIW…DYGI. The interval 1147 to 1173 is disordered; sequence QPKENATEKPDPQEENGESAFSHIANC.

The protein belongs to the TECPR1 family.

It is found in the cytoplasmic vesicle. The protein resides in the autophagosome membrane. It localises to the lysosome membrane. Tethering factor involved in autophagy. Involved in autophagosome maturation by promoting the autophagosome fusion with lysosomes. Binds phosphatidylinositol-3-phosphate (PtdIns(3)P) present at the surface of autophagosomes. The protein is Tectonin beta-propeller repeat-containing protein 1 (tecpr1) of Xenopus tropicalis (Western clawed frog).